We begin with the raw amino-acid sequence, 1329 residues long: BRCT domain-containing protein At4g02110 (1329 aa).

BRCT domains lie at 7–97 (LPPK…SILY) and 104–194 (NGIP…DYEI). 5 disordered regions span residues 295-378 (ANKT…SMER), 393-470 (GEEF…TSEL), 576-645 (EVPE…SPTD), 745-827 (NDVP…ADGK), and 952-1077 (AKKE…KESK). Polar residues-rich tracts occupy residues 323–335 (SLAT…LQRS) and 363–378 (SAFN…SMER). Basic and acidic residues-rich tracts occupy residues 410-422 (VSRK…HHNS) and 600-611 (RMKDKQETELTT). Basic residues predominate over residues 793–802 (GKSRVKKTKI). Composition is skewed to basic and acidic residues over residues 818–827 (DGGDNSADGK) and 971–983 (DDNK…EGIV). Low complexity predominate over residues 986-1004 (SSLQSGKKGSSSRVEVGKS). Residues 1024–1047 (VMKDVGDNSAKEKENIAVDNESRK) are compositionally biased toward basic and acidic residues. One can recognise a BRCT 3 domain in the interval 1090–1181 (FQDQEHEPKF…KLLQEEPYEW (92 aa)).

The protein is BRCT domain-containing protein At4g02110 of Arabidopsis thaliana (Mouse-ear cress).